The primary structure comprises 87 residues: U3-theraphotoxin-Cg1b (87 aa).

An N-terminal signal peptide occupies residues 1–23; it reads MRTLTLIAIVTCAALVIFHAAAA. Residues 24–48 constitute a propeptide that is removed on maturation; it reads EELEAQDVIQPEDIFTGVATLEEDR. 3 disulfides stabilise this stretch: cysteine 52–cysteine 65, cysteine 56–cysteine 79, and cysteine 73–cysteine 84.

The protein belongs to the neurotoxin 12 (Hwtx-2) family. 03 (juruin) subfamily. In terms of tissue distribution, expressed by the venom gland.

It is found in the secreted. Functionally, probable ion channel inhibitor. In Chilobrachys guangxiensis (Chinese earth tiger tarantula), this protein is U3-theraphotoxin-Cg1b.